A 150-amino-acid polypeptide reads, in one-letter code: MSSTKRQKNRVLVKLKKRKVRKDKIEKWAELALSALGLNNVELSVYITDDQEIRELNKTYRKKDKPTDVLSFPMGEEFGGYKILGDVVISQDTAERQARELGHSLEEEVKRLIVHGIVHLLGYDHEKGGEEEKKFRELENYVLSKLSKAL.

Zn(2+)-binding residues include H115, H119, and H125.

The protein belongs to the endoribonuclease YbeY family. Requires Zn(2+) as cofactor.

It is found in the cytoplasm. In terms of biological role, single strand-specific metallo-endoribonuclease involved in late-stage 70S ribosome quality control and in maturation of the 3' terminus of the 16S rRNA. In Aquifex aeolicus (strain VF5), this protein is Endoribonuclease YbeY.